A 56-amino-acid chain; its full sequence is Small ribosomal subunit protein uS14 (56 aa).

Residues cysteine 21, cysteine 24, cysteine 39, and cysteine 42 each coordinate Zn(2+).

This sequence belongs to the universal ribosomal protein uS14 family. As to quaternary structure, component of the 40S small ribosomal subunit. It depends on Zn(2+) as a cofactor.

It is found in the cytoplasm. The protein resides in the cytosol. The protein localises to the rough endoplasmic reticulum. This is Small ribosomal subunit protein uS14 (RpS29) from Spodoptera frugiperda (Fall armyworm).